Reading from the N-terminus, the 286-residue chain is 2-hydroxy-6-oxo-6-phenylhexa-2,4-dienoate hydrolase (286 aa).

Positions Val36 to His271 constitute an AB hydrolase-1 domain. Residues Gly42 to Gly43, Asn51, Asn111, Ser180, and Arg190 contribute to the substrate site. Residue His265 is the Proton acceptor of the active site. Residue Trp266 participates in substrate binding.

Belongs to the AB hydrolase superfamily. BphD family. In terms of assembly, homodimer.

The catalysed reaction is 2,6-dioxo-6-phenylhexa-3-enoate + H2O = 2-oxopent-4-enoate + benzoate + H(+). Its pathway is xenobiotic degradation; biphenyl degradation; 2-hydroxy-2,4-pentadienoate and benzoate from biphenyl: step 4/4. Its function is as follows. Catalyzes an unusual C-C bond hydrolysis of 2-hydroxy-6-oxo-6-phenylhexa-2,4-dienoic acid (HOPDA) to produce benzoic acid and 2-hydroxy-2,4-pentadienoic acid (HPD). This chain is 2-hydroxy-6-oxo-6-phenylhexa-2,4-dienoate hydrolase (bphD), found in Metapseudomonas furukawaii (Pseudomonas furukawaii).